The primary structure comprises 89 residues: MALTVEEKAQIVNEYKQAEGDTGSPEVQVALLTANINKLQDHFKANGKDHHSRRGLIRMVNQRRKLLDYLKGKDTTRYSTLIGRLGLRR.

Belongs to the universal ribosomal protein uS15 family. In terms of assembly, part of the 30S ribosomal subunit. Forms a bridge to the 50S subunit in the 70S ribosome, contacting the 23S rRNA.

One of the primary rRNA binding proteins, it binds directly to 16S rRNA where it helps nucleate assembly of the platform of the 30S subunit by binding and bridging several RNA helices of the 16S rRNA. Its function is as follows. Forms an intersubunit bridge (bridge B4) with the 23S rRNA of the 50S subunit in the ribosome. This chain is Small ribosomal subunit protein uS15, found in Azotobacter vinelandii (strain DJ / ATCC BAA-1303).